Here is a 435-residue protein sequence, read N- to C-terminus: 5'-deoxyadenosine deaminase (435 aa).

Zn(2+) contacts are provided by His64 and His66. Substrate-binding residues include Glu93 and His185. A Zn(2+)-binding site is contributed by His212. Residues Glu215 and Asp300 each contribute to the substrate site. Asp300 contacts Zn(2+).

Belongs to the metallo-dependent hydrolases superfamily. MTA/SAH deaminase family. Homotetramer. The cofactor is Zn(2+).

The enzyme catalyses 5'-deoxyadenosine + H2O + H(+) = 5'-deoxyinosine + NH4(+). It carries out the reaction S-adenosyl-L-homocysteine + H2O + H(+) = S-inosyl-L-homocysteine + NH4(+). The catalysed reaction is S-methyl-5'-thioadenosine + H2O + H(+) = S-methyl-5'-thioinosine + NH4(+). It catalyses the reaction adenosine + H2O + H(+) = inosine + NH4(+). It functions in the pathway amino-acid biosynthesis; S-adenosyl-L-methionine biosynthesis. Functionally, catalyzes the deamination of three SAM-derived enzymatic products, namely 5'-deoxyadenosine, S-adenosyl-L-homocysteine, and 5'-methylthioadenosine, to produce the inosine analogs. Can also deaminate adenosine. The preferred substrate for this enzyme is 5'-deoxyadenosine, but all these substrates are efficiently deaminated. Likely functions in a S-adenosyl-L-methionine (SAM) recycling pathway from S-adenosyl-L-homocysteine (SAH) produced from SAM-dependent methylation reactions. May also be involved in the recycling of 5'-deoxyadenosine, whereupon the 5'-deoxyribose moiety of 5'-deoxyinosine is further metabolized to deoxyhexoses used for the biosynthesis of aromatic amino acids in methanogens. The chain is 5'-deoxyadenosine deaminase from Methanobrevibacter smithii (strain ATCC 35061 / DSM 861 / OCM 144 / PS).